We begin with the raw amino-acid sequence, 689 residues long: Methionine--tRNA ligase (689 aa).

The short motif at 15-25 (PYANGPVHIGH) is the 'HIGH' region element. 4 residues coordinate Zn(2+): cysteine 147, cysteine 150, cysteine 160, and cysteine 163. Residues 342–346 (KISTS) carry the 'KMSKS' region motif. Threonine 345 provides a ligand contact to ATP. The region spanning 588–689 (DFAKMDIRVA…AVVNAGSMIG (102 aa)) is the tRNA-binding domain.

It belongs to the class-I aminoacyl-tRNA synthetase family. MetG type 1 subfamily. As to quaternary structure, homodimer. Zn(2+) serves as cofactor.

Its subcellular location is the cytoplasm. It catalyses the reaction tRNA(Met) + L-methionine + ATP = L-methionyl-tRNA(Met) + AMP + diphosphate. Functionally, is required not only for elongation of protein synthesis but also for the initiation of all mRNA translation through initiator tRNA(fMet) aminoacylation. The polypeptide is Methionine--tRNA ligase (Cytophaga hutchinsonii (strain ATCC 33406 / DSM 1761 / CIP 103989 / NBRC 15051 / NCIMB 9469 / D465)).